A 401-amino-acid chain; its full sequence is Argininosuccinate synthase (401 aa).

Residues 10–18 and Ala38 contribute to the ATP site; that span reads AYSGGVDTS. Tyr89 contributes to the L-citrulline binding site. Gly119 lines the ATP pocket. L-aspartate is bound by residues Thr121, Asn125, and Asp126. Asn125 lines the L-citrulline pocket. L-citrulline-binding residues include Arg129, Ser177, Ser186, Glu262, and Tyr274.

This sequence belongs to the argininosuccinate synthase family. Type 1 subfamily. Homotetramer.

It localises to the cytoplasm. The catalysed reaction is L-citrulline + L-aspartate + ATP = 2-(N(omega)-L-arginino)succinate + AMP + diphosphate + H(+). Its pathway is amino-acid biosynthesis; L-arginine biosynthesis; L-arginine from L-ornithine and carbamoyl phosphate: step 2/3. The protein is Argininosuccinate synthase of Synechococcus sp. (strain WH7803).